We begin with the raw amino-acid sequence, 180 residues long: Chromosome-anchoring protein RacA (180 aa).

The segment at residues 5–25 (TPFIAKKLGVSPKAVVRIAQQ) is a DNA-binding region (H-T-H motif). Residues 89 to 151 (SHDFEQLTAQ…LEATLKKEEP (63 aa)) adopt a coiled-coil conformation.

This sequence belongs to the RacA family.

Its subcellular location is the cytoplasm. In terms of biological role, required for the formation of axial filaments and for anchoring the origin regions at the cell poles in sporulating cells, thus ensuring proper chromosome segregation in the prespore. Binds in a dispersed manner throughout the chromosome but preferentially to sites clustered in the origin portion of the chromosome, causing condensation of the chromosome and its remodeling into an elongated, anchored structure. In Bacillus cereus (strain ATCC 10987 / NRS 248), this protein is Chromosome-anchoring protein RacA.